The primary structure comprises 571 residues: Urease subunit alpha (571 aa).

Residues 133–571 enclose the Urease domain; sequence GGIDTHIHFV…LPLAQRYFLF (439 aa). 3 residues coordinate Ni(2+): H138, H140, and K221. An N6-carboxylysine modification is found at K221. H223 contributes to the substrate binding site. Positions 250 and 276 each coordinate Ni(2+). H324 functions as the Proton donor in the catalytic mechanism. Residue D364 participates in Ni(2+) binding.

Belongs to the metallo-dependent hydrolases superfamily. Urease alpha subunit family. In terms of assembly, heterotrimer of UreA (gamma), UreB (beta) and UreC (alpha) subunits. Three heterotrimers associate to form the active enzyme. Ni cation serves as cofactor. In terms of processing, carboxylation allows a single lysine to coordinate two nickel ions.

The protein localises to the cytoplasm. The catalysed reaction is urea + 2 H2O + H(+) = hydrogencarbonate + 2 NH4(+). The protein operates within nitrogen metabolism; urea degradation; CO(2) and NH(3) from urea (urease route): step 1/1. The chain is Urease subunit alpha from Anaeromyxobacter sp. (strain K).